Reading from the N-terminus, the 648-residue chain is Rab11 family-interacting protein 1 (648 aa).

Residues 1–129 (MSLAASAGRG…DQSRRKKQWY (129 aa)) form the C2 domain. Positions 164–188 (SMKDKSRNPFGKLKDKIKGKNKDNT) are enriched in basic and acidic residues. 3 disordered regions span residues 164–470 (SMKD…GRKG), 483–503 (VRRP…SQNP), and 516–555 (VESK…PKIT). Polar residues predominate over residues 189-201 (SDTASAIVPSTTP). A phosphoserine mark is found at S205, S209, and S237. Composition is skewed to polar residues over residues 227-242 (PSLQ…SVLP) and 271-296 (SSAS…SNFS). Phosphoserine occurs at positions 304, 319, 343, 345, 347, 349, 360, 361, and 386. Residues 314–323 (DSLSRSNVCI) show a composition bias toward polar residues. Composition is skewed to basic and acidic residues over residues 381–394 (SDRR…KDSM) and 422–436 (ATKE…ESKK). Position 438 is a phosphoserine (S438). A compositionally biased stretch (basic and acidic residues) spans 445–454 (GKKDVAKGSE). The FIP-RBD domain maps to 576 to 638 (KKYQPSDPAF…EETPNILRVP (63 aa)). A necessary for interaction with RAB4A and RAB11A, subcellular location and endosomal recycling region spans residues 584–648 (AFAYAQLTHD…AQTGKKAGKM (65 aa)).

Homooligomer. Interacts with RAB11A, RAB11B, RAB25, RAB4A and RAB14.

The protein localises to the recycling endosome. The protein resides in the cytoplasmic vesicle. Its function is as follows. A Rab11 effector protein involved in the endosomal recycling process. Also involved in controlling membrane trafficking along the phagocytic pathway and in phagocytosis. Interaction with RAB14 may function in the process of neurite formation. In Rattus norvegicus (Rat), this protein is Rab11 family-interacting protein 1.